We begin with the raw amino-acid sequence, 1013 residues long: Receptor-type tyrosine-protein phosphatase N2 (1013 aa).

An N-terminal signal peptide occupies residues 1–19 (MALPLLLLLLLLLPPRVLP). Residues 1–419 (MALPLLLLLL…PGALPFAKPL (419 aa)) are involved in localization to secretory granules; interaction with CPE. Topologically, residues 20–613 (AAPSSVPHGR…QAEQEDSTKF (594 aa)) are extracellular. Disordered stretches follow at residues 116 to 137 (RHPE…ERRY), 273 to 302 (MPRP…TGEG), 342 to 382 (DHRG…VQDD), and 401 to 487 (LQDH…SLPA). Positions 419–430 (LKMERKKSERPE) are enriched in basic and acidic residues. A phosphoserine mark is found at Ser-434 and Ser-435. Asn-562 carries N-linked (GlcNAc...) asparagine glycosylation. Residues 614-634 (IALTLVSLACILGVLLASGLI) form a helical membrane-spanning segment. Topologically, residues 635 to 1013 (YCLRHSSQHR…VNAILKALPQ (379 aa)) are cytoplasmic. The Tyrosine-based internalization motif motif lies at 664-673 (YQELCRQRMA). Positions 673-717 (ATRPPDRPEGPHTSRISSVSSQFSDGPMPSPSARSSASSWSEEPV) are disordered. Residues 686–696 (SRISSVSSQFS) show a composition bias toward polar residues. 2 positions are modified to phosphoserine: Ser-690 and Ser-696. Residues 703–717 (PSARSSASSWSEEPV) are compositionally biased toward low complexity. One can recognise a Tyrosine-protein phosphatase domain in the interval 743-1003 (LEKEWEALCA…EFALTAVAEE (261 aa)). Residues Asp-911 and 943 to 949 (CSDGAGR) contribute to the substrate site. Cys-943 functions as the Phosphocysteine intermediate in the catalytic mechanism. Residue Lys-968 is modified to N6-acetyllysine. Position 988 (Gln-988) interacts with substrate. The Leucine-based sorting signal signature appears at 1002–1008 (EEVNAIL).

Belongs to the protein-tyrosine phosphatase family. Receptor class 8 subfamily. In terms of assembly, self-associates. Interacts (via cytoplasmic domain) with PTPRN (via cytoplasmic domain). Interacts (precursor form) with CPE. Interacts with HAP1. Interacts with AP2A1 or AP2A2 and AP1G1; indicative for an association with adaptor protein complex 2 (AP-2) and adaptor protein complex 1 (AP-1). Interacts with AP2M1; indicative for an association with adaptor protein complex 2 (AP-2). Interacts with MYO5A. Subject to proteolytic cleavage at multiple sites. As to expression, detected in pancreatic islets and adrenal medulla.

It localises to the cytoplasmic vesicle. Its subcellular location is the secretory vesicle membrane. The protein resides in the secretory vesicle. It is found in the synaptic vesicle membrane. It carries out the reaction O-phospho-L-tyrosyl-[protein] + H2O = L-tyrosyl-[protein] + phosphate. In terms of biological role, plays a role in vesicle-mediated secretory processes. Required for normal accumulation of secretory vesicles in hippocampus, pituitary and pancreatic islets. Required for the accumulation of normal levels of insulin-containing vesicles and preventing their degradation. Plays a role in insulin secretion in response to glucose stimuli. Required for normal accumulation of the neurotransmitters norepinephrine, dopamine and serotonin in the brain. In females, but not in males, required for normal accumulation and secretion of pituitary hormones, such as luteinizing hormone (LH) and follicle-stimulating hormone (FSH). Required to maintain normal levels of renin expression and renin release. May regulate catalytic active protein-tyrosine phosphatases such as PTPRA through dimerization. Has phosphatidylinositol phosphatase activity; the PIPase activity is involved in its ability to regulate insulin secretion. Can dephosphorylate phosphatidylinositol 4,5-biphosphate, phosphatidylinositol 5-phosphate and phosphatidylinositol 3-phosphate. Regulates PI(4,5)P2 level in the plasma membrane and localization of cofilin at the plasma membrane and thus is indirectly involved in regulation of actin dynamics related to cell migration and metastasis; upon hydrolysis of PI(4,5)P2 cofilin is released from the plasma membrane and acts in the cytoplasm in severing F-actin filaments. The polypeptide is Receptor-type tyrosine-protein phosphatase N2 (PTPRN2) (Macaca nemestrina (Pig-tailed macaque)).